We begin with the raw amino-acid sequence, 366 residues long: Class I histocompatibility antigen, Gogo-C*0201 alpha chain (366 aa).

Residues 1–24 (MRVMAPRTLILPLSGALALTETWA) form the signal peptide. The interval 25–114 (GSHSMRYFYT…LRGYYNQSED (90 aa)) is alpha-1. The Extracellular portion of the chain corresponds to 25–308 (GSHSMRYFYT…EPSSQPTIPI (284 aa)). N-linked (GlcNAc...) asparagine glycosylation is present at Asn-110. Residues 115-206 (GSHTLQSMYG…ENGKETLQRA (92 aa)) are alpha-2. 2 disulfide bridges follow: Cys-125–Cys-188 and Cys-227–Cys-283. Residues 207–298 (EPPKTHVTHH…GLPEPLTLRW (92 aa)) form an alpha-3 region. The 89-residue stretch at 209–297 (PKTHVTHHPL…EGLPEPLTLR (89 aa)) folds into the Ig-like C1-type domain. The interval 299–308 (EPSSQPTIPI) is connecting peptide. A helical transmembrane segment spans residues 309-333 (VGIVVGLAVLVVLAVLGAVVTAMMC). The Cytoplasmic portion of the chain corresponds to 334 to 366 (RRKSSGGKGGSCSQAACSNSAQGSDESLITCKA).

It belongs to the MHC class I family. Heterodimer of an alpha chain and a beta chain (beta-2-microglobulin).

It localises to the membrane. Its function is as follows. Involved in the presentation of foreign antigens to the immune system. This chain is Class I histocompatibility antigen, Gogo-C*0201 alpha chain, found in Gorilla gorilla gorilla (Western lowland gorilla).